Consider the following 194-residue polypeptide: Imidazoleglycerol-phosphate dehydratase (194 aa).

This sequence belongs to the imidazoleglycerol-phosphate dehydratase family.

The protein resides in the cytoplasm. The enzyme catalyses D-erythro-1-(imidazol-4-yl)glycerol 3-phosphate = 3-(imidazol-4-yl)-2-oxopropyl phosphate + H2O. It participates in amino-acid biosynthesis; L-histidine biosynthesis; L-histidine from 5-phospho-alpha-D-ribose 1-diphosphate: step 6/9. The chain is Imidazoleglycerol-phosphate dehydratase from Clostridium kluyveri (strain NBRC 12016).